A 23-amino-acid chain; its full sequence is Lycosin-II (23 aa).

A Leucine amide modification is found at Leu-21.

As to expression, expressed by the venom gland.

The protein resides in the secreted. Its subcellular location is the target cell membrane. Has strong antibacterial activity and biofilm inhibition effects against Gram-positive and -negative bacteria including E.coli, S.epidermidis, and A.baumannii and oxacillin-resistant S.aureus and meropenem-resistant P.aeruginosa. Is not cytotoxic against human foreskin fibroblast Hs27 or hemolytic against mammalian red blood cells. Its mechanism of action involves binding to lipoteichoic acid and lipopolysaccharide of Gram-positive and Gram-negative bacterial membranes, respectively, to destroy the bacterial membrane. In addition, it shows anti-inflammatory effects by inhibiting the expression of pro-inflammatory cytokines that are increased during bacterial infection in Hs27 cells. The polypeptide is Lycosin-II (Lycosa singoriensis (Wolf spider)).